The chain runs to 327 residues: Nucleotide-binding protein Mflv_3714 (327 aa).

Basic and acidic residues predominate over residues 1–22 (MTRQGMRDDLRGEADSVVHDGT). Residues 1 to 29 (MTRQGMRDDLRGEADSVVHDGTDDIDNEN) are disordered. 50 to 57 (GLSGAGRG) contributes to the ATP binding site. Residue 101–104 (DVRS) coordinates GTP.

The protein belongs to the RapZ-like family.

In terms of biological role, displays ATPase and GTPase activities. In Mycolicibacterium gilvum (strain PYR-GCK) (Mycobacterium gilvum (strain PYR-GCK)), this protein is Nucleotide-binding protein Mflv_3714.